A 602-amino-acid chain; its full sequence is MRKHLNDLYKQIEKFPKTSGCYKMYSKDNKILYIGKAKNLRSRVKNYFSKRTSHKTKILMNNVTNIEIITTNSEYEALLLECNLIKKYKPTYNIKLKDDKGYPMIRITCEKYPRIFKTRKIINDGSEYFGPYVNVKNLDLVLDLINKTFKTKKCKKKSKNPCLYFHMGQCLGVCYREDLEDEYRKEIEQIKHILNGNISKLLNDIEIKMKEVIMKENFEAAIKLKETKKSLIEISQTQIITKIDKLSEDYLYIHKTNSLNTIVILKYKDGKLTEKDIHFDESIYEEDELIEKFITQYYTSPNMIVPDKIHIFKKIDTSNITKLINELKNIKTEIIYKETKDNIKIIEMATSNAKLALITYNHEKNKAIENLKTILEMKKLPKTIEGFDIAHINGYKTVASLVTFKMGKPFKDGYRVYKINSLSNGEIDDCKAIKEVISRRYSKLINEQLKLPDLILIDGGKGQLNSAYSILKGLRIEEKIAICALAKKEEIIFLPNKNQGIKLQKRNSALQVLQNVRDEAHRRANNFNNKLHNNIKLNYTKIKGIGEQKAKKILKVLGTYKDILLLNEDEIATKMKINITMANKIKKFAEEQNLNNKQNNHI.

One can recognise a GIY-YIG domain in the interval 17 to 94 (KTSGCYKMYS…IKKYKPTYNI (78 aa)). One can recognise a UVR domain in the interval 199-234 (SKLLNDIEIKMKEVIMKENFEAAIKLKETKKSLIEI).

This sequence belongs to the UvrC family. In terms of assembly, interacts with UvrB in an incision complex.

It localises to the cytoplasm. Its function is as follows. The UvrABC repair system catalyzes the recognition and processing of DNA lesions. UvrC both incises the 5' and 3' sides of the lesion. The N-terminal half is responsible for the 3' incision and the C-terminal half is responsible for the 5' incision. In Borrelia recurrentis (strain A1), this protein is UvrABC system protein C.